We begin with the raw amino-acid sequence, 403 residues long: 5,7-dihydroxy-2-methylchromone synthase (403 aa).

CoA is bound at residue histidine 68. Residue cysteine 174 is part of the active site. Cysteine sulfinic acid (-SO2H) is present on cysteine 174. Residues leucine 277, serine 281, and 318 to 321 (GGRA) contribute to the CoA site.

This sequence belongs to the thiolase-like superfamily. Chalcone/stilbene synthases family. In terms of assembly, homodimer.

The catalysed reaction is 5 malonyl-CoA + 4 H(+) = 5,7-dihydroxy-2-methyl-4H-chromen-4-one + 5 CO2 + 5 CoA + H2O. Its pathway is secondary metabolite biosynthesis; flavonoid biosynthesis. Catalyzes the iterative condensations of 5 molecules of malonyl-CoA to produce a pentaketide 5,7-dihydroxy-2-methylchromone. This Aloe arborescens (Kidachi aloe) protein is 5,7-dihydroxy-2-methylchromone synthase.